Reading from the N-terminus, the 529-residue chain is Lanosterol 14-alpha demethylase (529 aa).

Cysteine 468 serves as a coordination point for heme.

The protein belongs to the cytochrome P450 family. Requires heme as cofactor.

It localises to the membrane. It catalyses the reaction a 14alpha-methyl steroid + 3 reduced [NADPH--hemoprotein reductase] + 3 O2 = a Delta(14) steroid + formate + 3 oxidized [NADPH--hemoprotein reductase] + 4 H2O + 4 H(+). The catalysed reaction is a 14alpha-methyl steroid + reduced [NADPH--hemoprotein reductase] + O2 = a 14alpha-hydroxymethyl steroid + oxidized [NADPH--hemoprotein reductase] + H2O + H(+). It carries out the reaction a 14alpha-hydroxymethyl steroid + reduced [NADPH--hemoprotein reductase] + O2 = a 14alpha-formyl steroid + oxidized [NADPH--hemoprotein reductase] + 2 H2O + H(+). The enzyme catalyses a 14alpha-formyl steroid + reduced [NADPH--hemoprotein reductase] + O2 = a Delta(14) steroid + formate + oxidized [NADPH--hemoprotein reductase] + H2O + 2 H(+). It catalyses the reaction lanosterol + 3 reduced [NADPH--hemoprotein reductase] + 3 O2 = 4,4-dimethyl-5alpha-cholesta-8,14,24-trien-3beta-ol + formate + 3 oxidized [NADPH--hemoprotein reductase] + 4 H2O + 4 H(+). The catalysed reaction is lanosterol + reduced [NADPH--hemoprotein reductase] + O2 = 32-hydroxylanosterol + oxidized [NADPH--hemoprotein reductase] + H2O + H(+). It carries out the reaction 32-hydroxylanosterol + reduced [NADPH--hemoprotein reductase] + O2 = 32-oxolanosterol + oxidized [NADPH--hemoprotein reductase] + 2 H2O + H(+). The enzyme catalyses 32-oxolanosterol + reduced [NADPH--hemoprotein reductase] + O2 = 4,4-dimethyl-5alpha-cholesta-8,14,24-trien-3beta-ol + formate + oxidized [NADPH--hemoprotein reductase] + H2O + 2 H(+). It catalyses the reaction eburicol + 3 reduced [NADPH--hemoprotein reductase] + 3 O2 = 14-demethyleburicol + formate + 3 oxidized [NADPH--hemoprotein reductase] + 4 H2O + 4 H(+). The catalysed reaction is eburicol + reduced [NADPH--hemoprotein reductase] + O2 = 32-hydroxyeburicol + oxidized [NADPH--hemoprotein reductase] + H2O + H(+). It carries out the reaction 32-hydroxyeburicol + reduced [NADPH--hemoprotein reductase] + O2 = 32-oxoeburicol + oxidized [NADPH--hemoprotein reductase] + 2 H2O + H(+). The enzyme catalyses 32-oxoeburicol + reduced [NADPH--hemoprotein reductase] + O2 = 14-demethyleburicol + formate + oxidized [NADPH--hemoprotein reductase] + H2O + 2 H(+). Its pathway is steroid biosynthesis; zymosterol biosynthesis; zymosterol from lanosterol: step 1/6. Its function is as follows. Sterol 14alpha-demethylase that plays a critical role in the third module of ergosterol biosynthesis pathway, being ergosterol the major sterol component in fungal membranes that participates in a variety of functions. The third module or late pathway involves the ergosterol synthesis itself through consecutive reactions that mainly occur in the endoplasmic reticulum (ER) membrane. In filamentous fungi, during the initial step of this module, lanosterol (lanosta-8,24-dien-3beta-ol) can be metabolized to eburicol. Sterol 14alpha-demethylase catalyzes the three-step oxidative removal of the 14alpha-methyl group (C-32) of both these sterols in the form of formate, and converts eburicol and lanosterol to 14-demethyleburicol (4,4,24-trimethylergosta-8,14,24(28)-trienol) and 4,4-dimethyl-5alpha-cholesta-8,14,24-trien-3beta-ol, respectively, which are further metabolized by other enzymes in the pathway to ergosterol. Can also use substrates not intrinsic to fungi, such as 24,25-dihydrolanosterol (DHL), producing 4,4-dimethyl-8,14-cholestadien-3-beta-ol, but at lower rates than the endogenous substrates. The protein is Lanosterol 14-alpha demethylase (ERG11) of Eremothecium gossypii (strain ATCC 10895 / CBS 109.51 / FGSC 9923 / NRRL Y-1056) (Yeast).